Consider the following 202-residue polypeptide: Imidazoleglycerol-phosphate dehydratase (202 aa).

The protein belongs to the imidazoleglycerol-phosphate dehydratase family.

The protein resides in the cytoplasm. The enzyme catalyses D-erythro-1-(imidazol-4-yl)glycerol 3-phosphate = 3-(imidazol-4-yl)-2-oxopropyl phosphate + H2O. The protein operates within amino-acid biosynthesis; L-histidine biosynthesis; L-histidine from 5-phospho-alpha-D-ribose 1-diphosphate: step 6/9. The polypeptide is Imidazoleglycerol-phosphate dehydratase (Chelativorans sp. (strain BNC1)).